Consider the following 151-residue polypeptide: Centrin-A (151 aa).

2 EF-hand domains span residues 80 to 115 and 116 to 151; these read DVYA…LGEA and RSDS…KKIY. The Ca(2+) site is built by D93, D95, S97, Y99, D104, D129, N131, D133, K135, and E140.

The protein belongs to the centrin family.

The protein resides in the cytoplasm. The protein localises to the cytoskeleton. Its subcellular location is the microtubule organizing center. It localises to the centrosome. It is found in the nucleus. Its function is as follows. Plays a fundamental role in microtubule-organizing center structure and function. This chain is Centrin-A (cenA), found in Dictyostelium discoideum (Social amoeba).